Here is a 283-residue protein sequence, read N- to C-terminus: UPF0276 protein Anae109_1558 (283 aa).

This sequence belongs to the UPF0276 family.

This Anaeromyxobacter sp. (strain Fw109-5) protein is UPF0276 protein Anae109_1558.